Reading from the N-terminus, the 400-residue chain is Tyrosine--tRNA ligase (400 aa).

The 'HIGH' region motif lies at Pro-42–His-51. The 'KMSKS' region motif lies at Lys-226–Ser-230. Lys-229 contacts ATP. One can recognise an S4 RNA-binding domain in the interval Phe-339–Val-399.

Belongs to the class-I aminoacyl-tRNA synthetase family. TyrS type 2 subfamily. As to quaternary structure, homodimer.

It localises to the cytoplasm. It carries out the reaction tRNA(Tyr) + L-tyrosine + ATP = L-tyrosyl-tRNA(Tyr) + AMP + diphosphate + H(+). In terms of biological role, catalyzes the attachment of tyrosine to tRNA(Tyr) in a two-step reaction: tyrosine is first activated by ATP to form Tyr-AMP and then transferred to the acceptor end of tRNA(Tyr). This Hahella chejuensis (strain KCTC 2396) protein is Tyrosine--tRNA ligase.